A 209-amino-acid polypeptide reads, in one-letter code: Orotate phosphoribosyltransferase (209 aa).

5-phospho-alpha-D-ribose 1-diphosphate-binding positions include Arg96, Lys100, His102, and Glu122–Ser130. Ser126 serves as a coordination point for orotate.

It belongs to the purine/pyrimidine phosphoribosyltransferase family. PyrE subfamily. In terms of assembly, homodimer. Mg(2+) is required as a cofactor.

The enzyme catalyses orotidine 5'-phosphate + diphosphate = orotate + 5-phospho-alpha-D-ribose 1-diphosphate. It participates in pyrimidine metabolism; UMP biosynthesis via de novo pathway; UMP from orotate: step 1/2. Functionally, catalyzes the transfer of a ribosyl phosphate group from 5-phosphoribose 1-diphosphate to orotate, leading to the formation of orotidine monophosphate (OMP). This Streptococcus agalactiae serotype Ia (strain ATCC 27591 / A909 / CDC SS700) protein is Orotate phosphoribosyltransferase.